The primary structure comprises 246 residues: UDP-N-acetyl-D-mannosaminuronic acid transferase (246 aa).

The protein belongs to the glycosyltransferase 26 family.

It catalyses the reaction UDP-N-acetyl-alpha-D-mannosaminouronate + N-acetyl-alpha-D-glucosaminyl-di-trans,octa-cis-undecaprenyl diphosphate = beta-D-ManNAcA-(1-&gt;4)-alpha-D-GlcNAc-di-trans,octa-cis-undecaprenyl diphosphate + UDP + H(+). It functions in the pathway bacterial outer membrane biogenesis; enterobacterial common antigen biosynthesis. Its function is as follows. Catalyzes the synthesis of Und-PP-GlcNAc-ManNAcA (Lipid II), the second lipid-linked intermediate involved in enterobacterial common antigen (ECA) synthesis. The chain is UDP-N-acetyl-D-mannosaminuronic acid transferase from Yersinia pseudotuberculosis serotype IB (strain PB1/+).